The primary structure comprises 3336 residues: MEVEQEQRRRKVEAGRTKLAHFRQRKTKGDSSHSEKKTAKRKGSAVDASVQEESPVTKEDSALCGGGDICKSTSCDDTPDGAGGAFAAQPEDCDGEKREDLEQLQQKQVNDHPPEQCGMFTVSDHPPEQHGMFTVGDHPPEQRGMFTVSDHPPEQHGMFTVSDHPPEQRGMFTISDHQPEQRGMFTVSDHTPEQRGIFTISDHPAEQRGMFTKECEQECELAITDLESGREDEAGLHQSQAVHGLELEALRLSLSNMHTAQLELTQANLQKEKETALTELREMLNSRRAQELALLQSRQQHELELLREQHAREKEEVVLRCGQEAAELKEKLQSEMEKNAQIVKTLKEDWESEKDLCLENLRKELSAKHQSEMEDLQNQFQKELAEQRAELEKIFQDKNQAERALRNLESHHQAAIEKLREDLQSEHGRCLEDLEFKFKESEKEKQLELENLQASYEDLKAQSQEEIRRLWSQLDSARTSRQELSELHEQLLARTSRVEDLEQLKQREKTQHESELEQLRIYFEKKLRDAEKTYQEDLTLLQQRLQGAREDALLDSVEVGLSCVGLEEKPEKGRKDHVDELEPERHKESLPRFQAELEESHRHQLEALESPLCIQHEGHVSDRCCVETSALGHEWRLEPSEGHSQELPWVHLQGVQDGDLEADTERAARVLGLETEHKVQLSLLQTELKEEIELLKIENRNLYGKLQHETRLKDDLEKVKHNLIEDHQKELNNAKQKTELMKQEFQRKETDWKVMKEELQREAEEKLTLMLLELREKAESEKQTIINKFELREAEMRQLQDQQAAQILDLERSLTEQQGRLQQLEQDLTSDDALHCSQCGREPPTAQDGELAALHVKEDCALQLMLARSRFLEERKEITEKFSAEQDAFLQEAQEQHARELQLLQERHQQQLLSVTAELEARHQAALGELTASLESKQGALLAARVAELQTKHAADLGALETRHLSSLDSLESCYLSEFQTIREEHRQALELLRADFEEQLWKKDSLHQTILTQELEKLKRKHEGELQSVRDHLRTEVSTELAGTVAHELQGVHQGEFGSEKKTALHEKEETLRLQSAQAQPFHQEEKESLSLQLQKKNHQVQQLKDQVLSLSHEIEECRSELEVLQQRRERENREGANLLSMLKADVNLSHSERGALQDALRRLLGLFGETLRAAVTLRSRIGERVGLCLDDAGAGLALSTAPALEETWSDVALPELDRTLSECAEMSSVAEISSHMRESFLMSPESVRECEQPIRRVFQSLSLAVDGLMEMALDSSRQLEEARQIHSRFEKEFSFKNEETAQVVRKHQELLECLKEESAAKAELALELHKTQGTLEGFKVETADLKEVLAGKEDSEHRLVLELESLRRQLQQAAQEQAALREECTRLWSRGEATATDAEAREAALRKEVEDLTKEQSETRKQAEKDRSALLSQMKILESELEEQLSQHRGCAKQAEAVTALEQQVASLDKHLRNQRQFMDEQAAEREHEREEFQQEIQRLEGQLRQAAKPQPWGPRDSQQAPLDGEVELLQQKLREKLDEFNELAIQKESADRQVLMQEEEIKRLEEMNINIRKKVAQLQEEVEKQKNIVKGLEQDKEVLKKQQMSSLLLASTLQSTLDAGRCPEPPSGSPPEGPEIQLEVTQRALLRRESEVLDLKEQLEKMKGDLESKNEEILHLNLKLDMQNSQTAVSLRELEEENTSLKVIYTRSSEIEELKATIENLQENQKRLQKEKAEEIEQLHEVIEKLQHELSLMGPVVHEVSDSQAGSLQSELLCSQAGGPRGQALQGELEAALEAKEALSRLLADQERRHSQALEALQQRLQGAEEAAELQLAELERNVALREAEVEDMASRIQEFEAALKAKEATIAERNLEIDALNQRKAAHSAELEAVLLALARIRRALEQQPLAAGAAPPELQWLRAQCARLSRQLQVLHQRFLRCQVELDRRQARRATAHTRVPGAHPQPRMDGGAKAQVTGDVEASHDAALEPVVPDPQGDLQPVLVTLKDAPLCKQEGVMSVLTVCQRQLQSELLLVKNEMRLSLEDGGKGKEKVLEDCQLPKVDLVAQVKQLQEKLNRLLYSMTFQNVDAADTKSLWPMASAHLLESSWSDDSCDGEEPDISPHIDTCDANTATGGVTDVIKNQAIDACDANTTPGGVTDVIKNWDSLIPDEMPDSPIQEKSECQDMSLSSPTSVLGGSRHQSHTAEAGPRKSPVGMLDLSSWSSPEVLRKDWTLEPWPSLPVTPHSGALSLCSADTSLGDRADTSLPQTQGPGLLCSPGVSAAALALQWAESPPADDHHVQRTAVEKDVEDFITTSFDSQETLSSPPPGLEGKADRSEKSDGSGFGARLSPGSGGPEAQTAGPVTPASISGRFQPLPEAMKEKEVRPKHVKALLQMVRDESHQILALSEGLAPPSGEPHPPRKEDEIQDISLHGGKTQEVPTACPDWRGDLLQVVQEAFEKEQEMQGVELQPRLSGSDLGGHSSLLERLEKIIREQGDLQEKSLEHLRLPDRSSLLSEIQALRAQLRMTHLQNQEKLQHLRTALTSAEARGSQQEHQLRRQVELLAYKVEQEKCIAGDLQKTLSEEQEKANSVQKLLAAEQTVVRDLKSDLCESRQKSEQLSRSLCEVQQEVLQLRSMLSSKENELKAALQELESEQGKGRALQSQLEEEQLRHLQRESQSAKALEELRASLETQRAQSSRLCVALKHEQTAKDNLQKELRIEHSRCEALLAQERSQLSELQKDLAAEKSRTLELSEALRHERLLTEQLSQRTQEACVHQDTQAHHALLQKLKEEKSRVVDLQAMLEKVQQQALHSQQQLEAEAQKHCEALRREKEVSATLKSTVEALHTQKRELRCSLEREREKPAWLQAELEQSHPRLKEQEGRKAARRSAEARQSPAAAEQWRKWQRDKEKLRELELQRQRDLHKIKQLQQTVRDLESKDEVPGSRLHLGSARRAAGSDADHLREQQRELEAMRQRLLSAARLLTSFTSQAVDRTVNDWTSSNEKAVMSLLHTLEELKSDLSRPTSSQKKMAAELQFQFVDVLLKDNVSLTKALSTVTQEKLELSRAVSKLEKLLKHHLQKGCSPSRSERSAWKPDETAPQSSLRRPDPGRLPPAASEEAHTSNVKMEKLYLHYLRAESFRKALIYQKKYLLLLIGGFQDSEQETLSMIAHLGVFPSKAERKITSRPFTRFRTAVRVVIAILRLRFLVKKWQEVDRKGALAQGKAPRPGPRARQPQSPPRTRESPPTRDVPSGHTRDPARGRRLAAAASPHSGGRATPSPNSRLERSLTASQDPEHSLTEYIHHLEVIQQRLGGVLPDSTSKKSCHPMIKQ.

Disordered stretches follow at residues 1–71 (MEVE…DICK) and 81–100 (GAGG…KRED). Over residues 27-37 (TKGDSSHSEKK) the composition is skewed to basic and acidic residues. A Phosphoserine modification is found at S44. S188 is subject to Phosphoserine. Position 191 is a phosphothreonine (T191). Positions 258-553 (HTAQLELTQA…RLQGAREDAL (296 aa)) form a coiled coil. A disordered region spans residues 569–589 (KPEKGRKDHVDELEPERHKES). 2 positions are modified to phosphoserine: S610 and S682. 2 coiled-coil regions span residues 675 to 835 (TEHK…DALH) and 1010 to 1146 (TILT…MLKA). Position 1245 is a phosphoserine (S1245). Positions 1299–1949 (NEETAQVVRK…FLRCQVELDR (651 aa)) form a coiled coil. The tract at residues 1619–1638 (TLDAGRCPEPPSGSPPEGPE) is disordered. A compositionally biased stretch (pro residues) spans 1626-1636 (PEPPSGSPPEG). 2 positions are modified to phosphoserine: S1653 and S1712. The disordered stretch occupies residues 1954 to 1974 (RATAHTRVPGAHPQPRMDGGA). At S2044 the chain carries Phosphoserine. A coiled-coil region spans residues 2064–2082 (VDLVAQVKQLQEKLNRLLY). Positions 2168 to 2214 (SLIPDEMPDSPIQEKSECQDMSLSSPTSVLGGSRHQSHTAEAGPRKS) are disordered. Residues S2177, S2192, S2225, S2226, and S2327 each carry the phosphoserine modification. Positions 2186-2197 (QDMSLSSPTSVL) are enriched in polar residues. Residues 2318–2374 (SFDSQETLSSPPPGLEGKADRSEKSDGSGFGARLSPGSGGPEAQTAGPVTPASISGR) are disordered. A compositionally biased stretch (basic and acidic residues) spans 2334-2343 (GKADRSEKSD). A phosphoserine mark is found at S2352, S2355, S2477, and S2486. Positions 2536-3086 (QEKLQHLRTA…EKLLKHHLQK (551 aa)) form a coiled coil. 2 disordered regions span residues 2875 to 2910 (LEQS…WRKW) and 3084 to 3126 (LQKG…EEAH). Composition is skewed to basic and acidic residues over residues 2876–2896 (EQSH…RSAE) and 3092–3102 (RSERSAWKPDE). The interaction with NEK2 stretch occupies residues 2983–3246 (LSAARLLTSF…ARQPQSPPRT (264 aa)). Residues 3195 to 3208 (RFRTAVRVVIAILR) form a calmodulin-binding region. Positions 3224–3300 (ALAQGKAPRP…RSLTASQDPE (77 aa)) are disordered. Residues 3226–3240 (AQGKAPRPGPRARQP) are compositionally biased toward low complexity. A compositionally biased stretch (polar residues) spans 3283–3297 (PSPNSRLERSLTASQ). Residue S3302 is modified to Phosphoserine.

As to quaternary structure, interacts with CHD3. Interacts with CHD4; the interaction regulates centrosome integrity. Interacts with DISC1 and PCM1. Binds calmodulin. Interacts with CDK5RAP2; the interaction is leading to centrosomal localization of PCNT and CDK5RAP2. Interacts with isoform 1 of NEK2. Interacts with CEP131. Interacts with CCDC13. Interacts with CEP68. Interacts with ATF5; the ATF5:PCNT:polyglutamylated tubulin (PGT) tripartite unites the mother centriole and the pericentriolar material (PCM) in the centrosome. Post-translationally, cleaved during mitotis which leads to removal of CDK5RAP2 from the centrosome and promotes centriole disengagement and subsequent centriole separation. The C-terminal fragment is rapidly degraded following cleavage. Ubiquitinated by TRIM43; leading to proteasomal degradation. As to expression, expressed in all tissues tested, including placenta, liver, kidney and thymus.

The protein resides in the cytoplasm. Its subcellular location is the cytoskeleton. It localises to the microtubule organizing center. The protein localises to the centrosome. Functionally, integral component of the filamentous matrix of the centrosome involved in the initial establishment of organized microtubule arrays in both mitosis and meiosis. Plays a role, together with DISC1, in the microtubule network formation. Is an integral component of the pericentriolar material (PCM). May play an important role in preventing premature centrosome splitting during interphase by inhibiting NEK2 kinase activity at the centrosome. In Homo sapiens (Human), this protein is Pericentrin (PCNT).